The following is a 169-amino-acid chain: Ribosome maturation factor RimM (169 aa).

Positions 95–169 (EDGYYWTDLI…QITVDWELGY (75 aa)) constitute a PRC barrel domain.

Belongs to the RimM family. In terms of assembly, binds ribosomal protein uS19.

It localises to the cytoplasm. An accessory protein needed during the final step in the assembly of 30S ribosomal subunit, possibly for assembly of the head region. Essential for efficient processing of 16S rRNA. May be needed both before and after RbfA during the maturation of 16S rRNA. It has affinity for free ribosomal 30S subunits but not for 70S ribosomes. This is Ribosome maturation factor RimM from Nitrosomonas europaea (strain ATCC 19718 / CIP 103999 / KCTC 2705 / NBRC 14298).